The sequence spans 1123 residues: MSTSRPSQSSSNSGRSRRSARAMALATVDAKLHATFEESGSSFDYSSSVRISGTADGVNQPRHDKVTTAYLHHMQKGKMIQPFGCLLALDEKTCKVIAYSENAPEMLTMVSHAVPSVGDHPALGIGTDIKTLFTAPSASALQKALGFAEVLLLNPVLIHCKTSGKPFYAIIHRVTGSMIIDFEPVKPYEVPMTAAGALQSYKLAAKAITRLQSLPSGSMERLCDTMVQEVFELTGYDRVMAYKFHEDDHGEVIAEITKPGLEPYLGLHYPATDIPQASRFLFMKNKVRMIVDCHAKHVRVLQDEKLPFDLTLCGSTLRAPHSCHAQYMANMDSIASLVMAVVVNDNEEDGDTDAIQPQKRKRLWGLVVCHNTTPRFVPFPLRYACEFLAQVFAIHVNKEIELEYQIIEKNILRTQTLLCDLVMRDAPLGIVSESPNIMDLVKCDGAALIYKNKVWRLGVTPSESQIREIAFWLSEYHMDSTGFSTDSLSDAGFPSALSLGDVVCGMAAVRVTAKDVVFWFRSHTAAEIRWGGAKHEAGEKDDGRRMHPRSSFKVFLDVVKARSLPWKEYEIDAMHSLQLILRNAFKDTESMDLNTKAINTRLSDLKIEGMQELEAVTSEIVRLIETATVPILAVDVDGLVNGWNIKIAELTGLPVGEAMGKHLLTLVEDSSTDRVKKMLNLALLGEEEKNVQFEIKTHGSKMDSGPISLVVNACASRDLRDNVVGVCFVAHDITAQKNVMDKFTRIEGDYKAIVQNRNPLIPPIFGTDEFGWCCEWNPAMTKLTGWKREEVMDKMLLGELFGTHMAACRLKNQEAFVNLGVVLNKAMTGLETEKVPFGFFARNGKYVECLLSVSKKLDVEGLVTGVFCFLQLASPELQQALHIQRLSEQTALKRLNALSYMKRQIRNPLCGIIFSRKMLEGTALGTEQKQLLRTSAQCQQQLSKILDDSDLDSIIDGYLDLEMAEFTLHEVLVTSLSQVMTKSNGKSIRIVNDVAEQIVMETLYGDSLRLQQVLADFLLISINFTPNGGQVVVAGTLTKEQLGKSVHLVKLELSITHGGSGVPEALLNQMFGNNGLESEEGISLLISRKLLKLMNGDVRYLREAGKSAFILSAELAAAHNLKG.

Positions 1–14 (MSTSRPSQSSSNSG) are enriched in low complexity. The disordered stretch occupies residues 1–21 (MSTSRPSQSSSNSGRSRRSAR). Residues 267 to 449 (LHYPATDIPQ…LVKCDGAALI (183 aa)) enclose the GAF domain. Residue Cys-323 participates in phytochromobilin binding. The region spanning 616–686 (VTSEIVRLIE…KMLNLALLGE (71 aa)) is the PAS 1 domain. One can recognise a PAC domain in the interval 689 to 745 (KNVQFEIKTHGSKMDSGPISLVVNACASRDLRDNVVGVCFVAHDITAQKNVMDKFTR). The PAS 2 domain occupies 749-823 (DYKAIVQNRN…EAFVNLGVVL (75 aa)). Residues 900–1119 (YMKRQIRNPL…ILSAELAAAH (220 aa)) form the Histidine kinase domain.

Belongs to the phytochrome family. In terms of assembly, heterodimer between subunit A and subunit B. Post-translationally, contains one covalently linked phytochromobilin chromophore.

Regulatory photoreceptor which exists in two forms that are reversibly interconvertible by light: the Pr form that absorbs maximally in the red region of the spectrum and the Pfr form that absorbs maximally in the far-red region. Photoconversion of Pr to Pfr induces an array of morphogenic responses, whereas reconversion of Pfr to Pr cancels the induction of those responses. Pfr controls the expression of a number of nuclear genes including those encoding the small subunit of ribulose-bisphosphate carboxylase, chlorophyll A/B binding protein, protochlorophyllide reductase, rRNA, etc. It also controls the expression of its own gene(s) in a negative feedback fashion. This Glycine max (Soybean) protein is Phytochrome A-2.